The primary structure comprises 375 residues: Putative nuclease YhcG (375 aa).

Interacts with DNA processing enzymes, including the restriction complex HsdMRS, the integrases IntF and IntS, and the recombinase PinE.

May be a nuclease involved in DNA recombination and repair. The chain is Putative nuclease YhcG (yhcG) from Escherichia coli (strain K12).